We begin with the raw amino-acid sequence, 163 residues long: Photosystem II extrinsic protein V (163 aa).

Positions 1–26 (MLRKLILITVATVFFACQLLVNPVSA) are cleaved as a signal peptide. Residues Cys-63, Cys-66, His-67, and His-118 each contribute to the heme c site.

This sequence belongs to the cytochrome c family. PsbV subfamily. PSII is composed of 1 copy each of membrane proteins PsbA, PsbB, PsbC, PsbD, PsbE, PsbF, PsbH, PsbI, PsbJ, PsbK, PsbL, PsbM, PsbT, PsbX, PsbY, PsbZ, Psb30/Ycf12, peripheral proteins PsbO, CyanoQ (PsbQ), PsbU, PsbV and a large number of cofactors. It forms dimeric complexes. It depends on heme c as a cofactor.

It is found in the cellular thylakoid membrane. Functionally, one of the extrinsic, lumenal subunits of photosystem II (PSII). PSII is a light-driven water plastoquinone oxidoreductase, using light energy to abstract electrons from H(2)O, generating a proton gradient subsequently used for ATP formation. The extrinsic proteins stabilize the structure of photosystem II oxygen-evolving complex (OEC), the ion environment of oxygen evolution and protect the OEC against heat-induced inactivation. Low-potential cytochrome c that plays a role in the OEC of PSII. This chain is Photosystem II extrinsic protein V, found in Aphanothece halophytica.